An 839-amino-acid chain; its full sequence is Protein translocase subunit SecA (839 aa).

Residues Gln85, 103-107 (GEGKT), and Asp493 each bind ATP. Residues 780–790 (QIHEQERERAS) are compositionally biased toward basic and acidic residues. The tract at residues 780-839 (QIHEQERERASQRATTAAPQNIQSQQSANTDDLPKVERNEACPCGSGKKFKNCHGRKSFS) is disordered. Positions 791 to 809 (QRATTAAPQNIQSQQSANT) are enriched in polar residues. Residues Cys821, Cys823, Cys832, and His833 each coordinate Zn(2+). The segment covering 827–839 (KKFKNCHGRKSFS) has biased composition (basic residues).

This sequence belongs to the SecA family. As to quaternary structure, monomer and homodimer. Part of the essential Sec protein translocation apparatus which comprises SecA, SecYEG and auxiliary proteins SecDF. Other proteins may also be involved. Zn(2+) is required as a cofactor.

It is found in the cell membrane. The protein resides in the cytoplasm. It catalyses the reaction ATP + H2O + cellular proteinSide 1 = ADP + phosphate + cellular proteinSide 2.. Functionally, part of the Sec protein translocase complex. Interacts with the SecYEG preprotein conducting channel. Has a central role in coupling the hydrolysis of ATP to the transfer of proteins into and across the cell membrane, serving as an ATP-driven molecular motor driving the stepwise translocation of polypeptide chains across the membrane. The chain is Protein translocase subunit SecA from Streptococcus pyogenes serotype M6 (strain ATCC BAA-946 / MGAS10394).